A 301-amino-acid chain; its full sequence is Acetylglutamate kinase (301 aa).

Substrate-binding positions include 71–72, arginine 93, and asparagine 198; that span reads GG.

This sequence belongs to the acetylglutamate kinase family. ArgB subfamily.

Its subcellular location is the cytoplasm. The catalysed reaction is N-acetyl-L-glutamate + ATP = N-acetyl-L-glutamyl 5-phosphate + ADP. Its pathway is amino-acid biosynthesis; L-arginine biosynthesis; N(2)-acetyl-L-ornithine from L-glutamate: step 2/4. Its function is as follows. Catalyzes the ATP-dependent phosphorylation of N-acetyl-L-glutamate. This chain is Acetylglutamate kinase, found in Rhizorhabdus wittichii (strain DSM 6014 / CCUG 31198 / JCM 15750 / NBRC 105917 / EY 4224 / RW1) (Sphingomonas wittichii).